An 872-amino-acid chain; its full sequence is MLSNTIRSNFLKFYANRHHTILPSSPVFPHNDPSILFTNAGMNQFKDIFLNKEKVSYSRATTSQKCIRAGGKHNDLDNVGHTSRHLTFFEMLGNFSFGDYFKAEAIAFAWEVSLSVFNFNPEGIYATVHEKDDEAFALWEAYLPTDRIFRLTDKDNFWSMANTGPCGYCSELLFDRGPSFGNASSPLDDTDGERFLEYWNLVFMEFNRTSEGSLLALPNKHVDTGAGLERLVSLIAGTHTVFEADVLRELIAKTEQLSGKVYHPDDSGAAFRVIADHVRSLSFAIADGLLPGNTERGYVLRKILRRSVNYGRRLGFRNPFLAEIVPSLADAMGEAYPELKNSLSQIQKVLTLEEESFFKTLDRGGNLLQQVLKSSSSSSCISGEDAFKLKDTYGMPIDEISLLAKDYDYSVDMDTFHKLEQEAKERSRKNVVQSQGTSESIYNELHLTSEFIGYDHLSCDTFIEAIISKDHIVSSLQEKQEGAIVLKVSPFYAEKGGQVGDSGEIFCSEGTFIVTHTTSPKAGLIVHHGRISQGSLTVEAAVTAQVNRYRRKRIANNHTACHLLHKALEITLGDHIRQAGSYVDDTKIRLDFTHPQAISPEDLLCIETLVNESIRENEPVDIREALYSDVMNSSEIKQFFGDKYSDVVRVVSAGHSHELCGGTHAEATGDIGFFRITKEHAVAMGIRRIEAVTGEKAEATVHQQSEVLEEIATLLQVPRDQIVSRLTATLDERKQQDKRLNELENSLIQTKLDKLIHNCHQRQGITCLVHHLAEHENHRLQQYAQCLHQRIPEKLISLWTTEKNGKYIVLSRVSDDLITQGVHAQDLLKAVLTPCGGRWGGKDQSAQGSAPALPATEVLNETLWQWISTQLI.

The Zn(2+) site is built by His558, His562, Cys660, and His664.

This sequence belongs to the class-II aminoacyl-tRNA synthetase family. Zn(2+) serves as cofactor.

It is found in the cytoplasm. The enzyme catalyses tRNA(Ala) + L-alanine + ATP = L-alanyl-tRNA(Ala) + AMP + diphosphate. Functionally, catalyzes the attachment of alanine to tRNA(Ala) in a two-step reaction: alanine is first activated by ATP to form Ala-AMP and then transferred to the acceptor end of tRNA(Ala). Also edits incorrectly charged Ser-tRNA(Ala) and Gly-tRNA(Ala) via its editing domain. The polypeptide is Alanine--tRNA ligase (Chlamydia pneumoniae (Chlamydophila pneumoniae)).